We begin with the raw amino-acid sequence, 541 residues long: MDRLIKLDPSNIVLIRVEEGQKCLGKITLNNVMYTMPVAFRIQPLIKTRYTIKPQSGIISPLASLVIEITYHPPQQQGSNNLPHSFPFSDDSFLLHSVLAPGAAIKEPSSMFDSVPSDWFTTKKKQVFIDSAIKVMFVGSQILTQLVEDGNSMDDIREVLEKSDPLWESVNSKDSQGQTLLHLAISKTRPDLVQLILEFKPDIEAINSVGSTPLEAASSSGESLIVELLLAHKANTEGSESSVFRPIHHASREGHMEILRLLLLKGARVDSLTKDGNTSLHLAVEEKRRDCARLLLANGARTDVRNMREGDTPLHIAAANGDENMVKLLLHKGATKYVRNKLGKTAFDVAAENGHSRLFDALRLGDNLCAAARKGEVRTIQKVLESGGVINGRDQNGWTSLHRAAFKGRMDAVRFLVEKGIDLDAKDEDGYTALHCAAESGHADVTEFLVKKGADVEARTNKGVSALQIVESLNYVGITRILVNGGASREGLGEKPPSAPSKIPFGRKVESGSVMTMKKKMSSRTRALRGSFDHSMPLAVL.

Residues 4 to 138 (LIKLDPSNIV…IDSAIKVMFV (135 aa)) enclose the MSP domain. ANK repeat units lie at residues 176-205 (QGQT…DIEA), 209-238 (VGST…NTEG), 242-271 (SVFR…RVDS), 275-304 (DGNT…RTDV), 309-338 (EGDT…TKYV), 342-372 (LGKT…CAAA), 374-392 (KGEV…VING), 396-425 (NGWT…DLDA), 429-458 (DGYT…DVEA), and 462-491 (KGVS…SREG).

Interacts with EX70I at the periarbuscular membrane (PAM) around the arbuscule hyphal tips. In terms of tissue distribution, expressed in roots.

The protein resides in the cytoplasm. The protein localises to the nucleus. It localises to the cell membrane. Functionally, required for arbuscular mycorrhizal (AM) symbiosis with AM fungi (e.g. Glomus versiforme and Gigaspora gigantea) both during fungal passage across root epidermis and for arbuscule formation in cortical cells; this symbiosis promotes phosphorus (P) and copper (Cu) uptake. Essential for infection by symbiotic nitrogen-fixing rhizobial bacteria (e.g. Sinorhizobium meliloti) leading to the formation of root nodules. This chain is Protein VAPYRIN, found in Medicago truncatula (Barrel medic).